The following is a 197-amino-acid chain: FMN-dependent NADH:quinone oxidoreductase (197 aa).

FMN contacts are provided by residues S10, 16-18 (SKS), and 96-99 (MYNF).

This sequence belongs to the azoreductase type 1 family. In terms of assembly, homodimer. The cofactor is FMN.

The enzyme catalyses 2 a quinone + NADH + H(+) = 2 a 1,4-benzosemiquinone + NAD(+). It carries out the reaction N,N-dimethyl-1,4-phenylenediamine + anthranilate + 2 NAD(+) = 2-(4-dimethylaminophenyl)diazenylbenzoate + 2 NADH + 2 H(+). Its function is as follows. Quinone reductase that provides resistance to thiol-specific stress caused by electrophilic quinones. In terms of biological role, also exhibits azoreductase activity. Catalyzes the reductive cleavage of the azo bond in aromatic azo compounds to the corresponding amines. This Marinomonas sp. (strain MWYL1) protein is FMN-dependent NADH:quinone oxidoreductase.